The sequence spans 493 residues: Xaa-Pro dipeptidase (493 aa).

Ala2 carries the N-acetylalanine modification. Residue Ser167 is modified to Phosphoserine. His255 contacts a dipeptide. Mn(2+) contacts are provided by Asp276, Asp287, and His370. Asp287 provides a ligand contact to a dipeptide. Residues His377 and Arg398 each contribute to the a dipeptide site. Mn(2+) is bound by residues Glu412 and Glu452.

Belongs to the peptidase M24B family. Eukaryotic-type prolidase subfamily. As to quaternary structure, homodimer. Mn(2+) serves as cofactor.

The enzyme catalyses Xaa-L-Pro dipeptide + H2O = an L-alpha-amino acid + L-proline. Functionally, dipeptidase that catalyzes the hydrolysis of dipeptides with a prolyl (Xaa-Pro) or hydroxyprolyl residue in the C-terminal position. The preferred dipeptide substrate is Gly-Pro, but other Xaa-Pro dipeptides, such as Ala-Pro, Met-Pro, Phe-Pro, Val-Pro and Leu-Pro, can be cleaved. Plays an important role in collagen metabolism because the high level of iminoacids in collagen. The sequence is that of Xaa-Pro dipeptidase (Pepd) from Mus musculus (Mouse).